The chain runs to 272 residues: MKVLLGLLLGYSVLILAHELPDLPRTQHPPKSELSYWCTYVPQCDFCWDCQDGICKNKITESRFIDSNHSIVNCRVFRDSKTQSCLYEISSKMPNHFNMECLHPRPYTGNEIFMRTWGGGDHQQLSIKQFCLYFIIGIAYTGCFVCALCKNLRLRTTMKLFILLSILVWLAQPVLNRPLSIFYTKQILPRTYTPPMRELEYWCTYGKHCDFCWDCKNGICKNKVLDDMPLIVQNDYISKCSITRFIDRCMYFIEPKIPYIHYMNCSLPTYFS.

Residues 1–17 (MKVLLGLLLGYSVLILA) traverse the membrane as a helical segment. N68 carries an N-linked (GlcNAc...) asparagine; by host glycan. Helical transmembrane passes span 129–149 (QFCL…CALC) and 156–176 (TTMK…PVLN). A glycan (N-linked (GlcNAc...) asparagine; by host) is linked at N264.

It belongs to the asfivirus MGF 110 family.

It localises to the host membrane. In terms of biological role, plays a role in virus cell tropism, and may be required for efficient virus replication in macrophages. This Ornithodoros (relapsing fever ticks) protein is Protein MGF 110-11L.